The chain runs to 291 residues: Nitrogenase iron protein (291 aa).

An ATP-binding site is contributed by 11 to 18 (GKGGIGKS). Cys-99 contacts [4Fe-4S] cluster. Position 102 is an ADP-ribosylarginine; by dinitrogenase reductase ADP-ribosyltransferase (Arg-102). Residue Cys-133 coordinates [4Fe-4S] cluster.

This sequence belongs to the NifH/BchL/ChlL family. Homodimer. It depends on [4Fe-4S] cluster as a cofactor. The reversible ADP-ribosylation of Arg-102 inactivates the nitrogenase reductase and regulates nitrogenase activity.

It carries out the reaction N2 + 8 reduced [2Fe-2S]-[ferredoxin] + 16 ATP + 16 H2O = H2 + 8 oxidized [2Fe-2S]-[ferredoxin] + 2 NH4(+) + 16 ADP + 16 phosphate + 6 H(+). Its function is as follows. The key enzymatic reactions in nitrogen fixation are catalyzed by the nitrogenase complex, which has 2 components: the iron protein and the molybdenum-iron protein. The protein is Nitrogenase iron protein of Cereibacter sphaeroides (strain ATCC 17023 / DSM 158 / JCM 6121 / CCUG 31486 / LMG 2827 / NBRC 12203 / NCIMB 8253 / ATH 2.4.1.) (Rhodobacter sphaeroides).